A 267-amino-acid chain; its full sequence is Phosphate import ATP-binding protein PstB 2 (267 aa).

Residues 21-262 (LSTKDVHVYY…AKLQSTNDYV (242 aa)) form the ABC transporter domain. Position 53–60 (53–60 (GPSGSGKS)) interacts with ATP.

Belongs to the ABC transporter superfamily. Phosphate importer (TC 3.A.1.7) family. As to quaternary structure, the complex is composed of two ATP-binding proteins (PstB), two transmembrane proteins (PstC and PstA) and a solute-binding protein (PstS).

It localises to the cell membrane. The catalysed reaction is phosphate(out) + ATP + H2O = ADP + 2 phosphate(in) + H(+). Part of the ABC transporter complex PstSACB involved in phosphate import. Responsible for energy coupling to the transport system. The polypeptide is Phosphate import ATP-binding protein PstB 2 (Streptococcus pneumoniae (strain ATCC BAA-255 / R6)).